A 339-amino-acid chain; its full sequence is Methylglutaconyl-CoA hydratase, mitochondrial (339 aa).

Residues 1–67 (MAAAVAAAPG…AGGPAPKRGY (67 aa)) constitute a mitochondrion transit peptide. The residue at position 100 (lysine 100) is an N6-acetyllysine; alternate. The residue at position 100 (lysine 100) is an N6-succinyllysine; alternate. Positions 105–119 (KNLIKMLSKAVDALK) are RNA-binding. Position 109 is an N6-succinyllysine (lysine 109). Lysine 113 and lysine 144 each carry N6-acetyllysine; alternate. Residues lysine 113 and lysine 144 each carry the N6-succinyllysine; alternate modification. An N6-succinyllysine mark is found at lysine 148 and lysine 160. Lysine 204 and lysine 211 each carry N6-acetyllysine; alternate. Lysine 204 and lysine 211 each carry N6-succinyllysine; alternate. Position 329 is an N6-succinyllysine (lysine 329).

It belongs to the enoyl-CoA hydratase/isomerase family. As to quaternary structure, homohexamer.

Its subcellular location is the mitochondrion. It carries out the reaction (3S)-3-hydroxy-3-methylglutaryl-CoA = 3-methyl-(2E)-glutaconyl-CoA + H2O. The catalysed reaction is (3S)-citramalyl-CoA = itaconyl-CoA + H2O. It catalyses the reaction 3-hydroxyisovaleryl-CoA = 3-methylbut-2-enoyl-CoA + H2O. The enzyme catalyses (S)-3-hydroxyglutaryl-CoA = (2E)-glutaconyl-CoA + H2O. Its pathway is amino-acid degradation; L-leucine degradation; (S)-3-hydroxy-3-methylglutaryl-CoA from 3-isovaleryl-CoA: step 3/3. In terms of biological role, catalyzes the fifth step in the leucine degradation pathway, the reversible hydration of 3-methylglutaconyl-CoA (3-MG-CoA) to 3-hydroxy-3-methylglutaryl-CoA (HMG-CoA). Can catalyze the reverse reaction but at a much lower rate in vitro. HMG-CoA is then quickly degraded by another enzyme (such as HMG-CoA lyase) to give acetyl-CoA and acetoacetate. Uses other substrates such as (2E)-glutaconyl-CoA efficiently in vitro, and to a lesser extent 3-methylcrotonyl-CoA (3-methyl-(2E)-butenoyl-CoA), crotonyl-CoA ((2E)-butenoyl-CoA) and 3-hydroxybutanoyl-CoA (the missing carboxylate reduces affinity to the active site). Originally it was identified as an RNA-binding protein as it binds to AU-rich elements (AREs) in vitro. AREs direct rapid RNA degradation and mRNA deadenylation. Might have itaconyl-CoA hydratase activity, converting itaconyl-CoA into citramalyl-CoA in the C5-dicarboxylate catabolism pathway. The C5-dicarboxylate catabolism pathway is required to detoxify itaconate, an antimicrobial metabolite and immunomodulator produced by macrophages during certain infections, that can act as a vitamin B12-poisoning metabolite. This is Methylglutaconyl-CoA hydratase, mitochondrial (AUH) from Homo sapiens (Human).